A 149-amino-acid polypeptide reads, in one-letter code: Large ribosomal subunit protein bL20m (149 aa).

The transit peptide at 1–9 directs the protein to the mitochondrion; the sequence is MVFLSLSRW.

This sequence belongs to the bacterial ribosomal protein bL20 family. In terms of assembly, component of the mitochondrial ribosome large subunit (39S) which comprises a 16S rRNA and about 50 distinct proteins.

It localises to the mitochondrion. The chain is Large ribosomal subunit protein bL20m (mrpl20) from Xenopus laevis (African clawed frog).